We begin with the raw amino-acid sequence, 346 residues long: Dihydroorotase (346 aa).

Residues H14 and H16 each coordinate Zn(2+). Residues 16–18 (HLR) and N42 each bind substrate. Residues K100, H137, and H175 each coordinate Zn(2+). K100 carries the N6-carboxylysine modification. H137 lines the substrate pocket. Substrate is bound at residue L220. D248 contacts Zn(2+). D248 is a catalytic residue. H252 and A264 together coordinate substrate.

The protein belongs to the metallo-dependent hydrolases superfamily. DHOase family. Class II DHOase subfamily. In terms of assembly, homodimer. Requires Zn(2+) as cofactor.

The enzyme catalyses (S)-dihydroorotate + H2O = N-carbamoyl-L-aspartate + H(+). Its pathway is pyrimidine metabolism; UMP biosynthesis via de novo pathway; (S)-dihydroorotate from bicarbonate: step 3/3. In terms of biological role, catalyzes the reversible cyclization of carbamoyl aspartate to dihydroorotate. The sequence is that of Dihydroorotase from Ruegeria sp. (strain TM1040) (Silicibacter sp.).